Consider the following 189-residue polypeptide: RxLR effector protein CRE18 (189 aa).

Positions 1–23 (MSKLFYAFAVLAVHVLTSSPTTA) are cleaved as a signal peptide. A RxLR-dEER motif is present at residues 47–68 (RFLRSIHEGEDSLKPSAFSEER).

It belongs to the RxLR effector family.

Its subcellular location is the secreted. It localises to the host cytoplasm. The protein resides in the host nucleus. Its function is as follows. Effector that is involved in host plant infection. Contributes to virulence during the early infection stage, by inhibiting plant defense responses induced by both PAMP-triggered immunity (PTI) and effector-triggered immunity (ETI). The sequence is that of RxLR effector protein CRE18 from Phytophthora infestans (strain T30-4) (Potato late blight agent).